Reading from the N-terminus, the 199-residue chain is MLAGGVPHGTVAFAYLAVVFAVTGINHLDGVADAGDAAVVHGDPADRRTVLKDTTTGVGAIAAVVVVVAGLVTGSLGVAALPTWTAVGVVVATEVGAKTSMAAVACLAHAPHDGLGSQFTGNATPGALPAVAGVALPVALASVPSPAAAGALAGAVGAGALTRRWLTGLLGGANGDVFGAVNEVSRVVGLHAGVVVWTL.

2 helical membrane passes run 2–22 and 61–81; these read LAGGVPHGTVAFAYLAVVFAV and IAAVVVVVAGLVTGSLGVAAL.

It belongs to the CobS family. Requires Mg(2+) as cofactor.

It localises to the cell membrane. The enzyme catalyses alpha-ribazole + adenosylcob(III)inamide-GDP = adenosylcob(III)alamin + GMP + H(+). The catalysed reaction is alpha-ribazole 5'-phosphate + adenosylcob(III)inamide-GDP = adenosylcob(III)alamin 5'-phosphate + GMP + H(+). The protein operates within cofactor biosynthesis; adenosylcobalamin biosynthesis; adenosylcobalamin from cob(II)yrinate a,c-diamide: step 7/7. Its function is as follows. Joins adenosylcobinamide-GDP and alpha-ribazole to generate adenosylcobalamin (Ado-cobalamin). Also synthesizes adenosylcobalamin 5'-phosphate from adenosylcobinamide-GDP and alpha-ribazole 5'-phosphate. The protein is Adenosylcobinamide-GDP ribazoletransferase of Halobacterium salinarum (strain ATCC 700922 / JCM 11081 / NRC-1) (Halobacterium halobium).